Consider the following 138-residue polypeptide: Large ribosomal subunit protein uL16 (138 aa).

Over residues 1 to 14 (MLQPKRTKYRRTHR) the composition is skewed to basic residues. The disordered stretch occupies residues 1–24 (MLQPKRTKYRRTHRLQHDKGEAHT). A compositionally biased stretch (basic and acidic residues) spans 15 to 24 (LQHDKGEAHT).

It belongs to the universal ribosomal protein uL16 family. Part of the 50S ribosomal subunit.

In terms of biological role, binds 23S rRNA and is also seen to make contacts with the A and possibly P site tRNAs. The polypeptide is Large ribosomal subunit protein uL16 (Mycoplasma mobile (strain ATCC 43663 / 163K / NCTC 11711) (Mesomycoplasma mobile)).